Here is a 146-residue protein sequence, read N- to C-terminus: UPF0178 protein BCAH187_A3092 (146 aa).

It belongs to the UPF0178 family.

The chain is UPF0178 protein BCAH187_A3092 from Bacillus cereus (strain AH187).